Reading from the N-terminus, the 2052-residue chain is Unconventional myosin-X (2052 aa).

The residue at position 1 (Met1) is an N-acetylmethionine. Positions 63–739 (EGVDDMATLT…LEQKLEKRQE (677 aa)) constitute a Myosin motor domain. Residues Asn104, Tyr113, 160–165 (GAGKTE), and Asn215 contribute to the ATP site. The actin-binding stretch occupies residues 619 to 641 (LHSLMATLSASNPFFVRCIKPNM). IQ domains are found at residues 742-763 (VTRA…KQYK), 764-787 (KVLD…RFLH), and 788-817 (LKKA…EKRA). The segment at 814–884 (EKRAEEEKRK…LSRELEKQKE (71 aa)) is SAH. Residues 819 to 843 (EEKRKREEEEKRKREEEERERERER) form a disordered region. Residues 885 to 935 (NKQVEEILRLEKEIEDLQRMKERQELSLTEASLQKLQQLRDEELRRLEDEA) adopt a coiled-coil conformation. Phosphoserine occurs at positions 963 and 966. The segment at 964–1093 (VGSGCTGEQG…DYDQDDYEDG (130 aa)) is disordered. Residues 988–1003 (PEEEEVDEGFEADDDA) show a composition bias toward acidic residues. A compositionally biased stretch (polar residues) spans 1040–1049 (VVPTSPSADS). Residues 1081–1092 (GDYDYDQDDYED) show a composition bias toward acidic residues. Residue Thr1152 is modified to Phosphothreonine. PH domains are found at residues 1206-1304 (EALK…QVHA) and 1386-1491 (EFIV…NVTD). Residues 1541–1689 (LPYGDINLNL…PSRDEIEALI (149 aa)) enclose the MyTH4 domain. Positions 1694–2038 (MTSTVHCHGG…AYISMIVKKR (345 aa)) constitute an FERM domain.

This sequence belongs to the TRAFAC class myosin-kinesin ATPase superfamily. Myosin family. Monomer, when in an inactive conformation in the cytosol. Homodimer in its active, membrane-bound conformation; antiparallel coiled coil-mediated dimer formation. Interacts with ECPAS. Interacts with NEO 1. Interacts with VASP. Interacts with DCC and ITGB5; the presence of DCC inhibits ITGB5 binding. Interacts with tubulin; ITGB5 or DCC binding inhibits tubulin binding. Interacts strongly with CALM3 and weakly with CALM, the CALM3 interaction is essential for function in filopodial extension and motility. Interacts with ITGB1, ITGB3 and ITGB5. Detected in kidney, testis, liver, kidney, cerebellum and brain cortex (at protein level).

It localises to the cytoplasm. The protein resides in the cytosol. It is found in the cell projection. Its subcellular location is the lamellipodium. The protein localises to the ruffle. It localises to the cytoskeleton. The protein resides in the filopodium tip. It is found in the cell cortex. Its subcellular location is the filopodium membrane. Myosins are actin-based motor molecules with ATPase activity. Unconventional myosins serve in intracellular movements. MYO10 binds to actin filaments and actin bundles and functions as a plus end-directed motor. Moves with higher velocity and takes larger steps on actin bundles than on single actin filaments. The tail domain binds to membranous compartments containing phosphatidylinositol 3,4,5-trisphosphate, which are then moved relative to actin filaments. Regulates cell shape, cell spreading and cell adhesion. Stimulates the formation and elongation of filopodia. In hippocampal neurons it induces the formation of dendritic filopodia by trafficking the actin-remodeling protein VASP to the tips of filopodia, where it promotes actin elongation. Plays a role in formation of the podosome belt in osteoclasts. This chain is Unconventional myosin-X (MYO10), found in Bos taurus (Bovine).